Reading from the N-terminus, the 174-residue chain is Large ribosomal subunit protein bL12cy (174 aa).

A chloroplast-targeting transit peptide spans 1–45 (MASTTFSSAFSILSLPSSSPSPPPWAPRTLPVANRRRRAAAVAST).

This sequence belongs to the bacterial ribosomal protein bL12 family.

It is found in the plastid. It localises to the chloroplast. This chain is Large ribosomal subunit protein bL12cy (RPL12-2), found in Secale cereale (Rye).